Reading from the N-terminus, the 671-residue chain is DNA ligase (671 aa).

NAD(+) contacts are provided by residues 32–36 (DVEYD), 81–82 (SL), and Glu-113. Lys-115 acts as the N6-AMP-lysine intermediate in catalysis. 4 residues coordinate NAD(+): Arg-136, Glu-173, Lys-290, and Lys-314. 4 residues coordinate Zn(2+): Cys-408, Cys-411, Cys-426, and Cys-432. Residues 593–671 (EIDSPFAGKT…EAEMLRLLGS (79 aa)) form the BRCT domain.

The protein belongs to the NAD-dependent DNA ligase family. LigA subfamily. It depends on Mg(2+) as a cofactor. Requires Mn(2+) as cofactor.

The enzyme catalyses NAD(+) + (deoxyribonucleotide)n-3'-hydroxyl + 5'-phospho-(deoxyribonucleotide)m = (deoxyribonucleotide)n+m + AMP + beta-nicotinamide D-nucleotide.. Functionally, DNA ligase that catalyzes the formation of phosphodiester linkages between 5'-phosphoryl and 3'-hydroxyl groups in double-stranded DNA using NAD as a coenzyme and as the energy source for the reaction. It is essential for DNA replication and repair of damaged DNA. This chain is DNA ligase, found in Escherichia coli O17:K52:H18 (strain UMN026 / ExPEC).